Here is a 139-residue protein sequence, read N- to C-terminus: Protein archease (139 aa).

The Ca(2+) site is built by D12, D138, and I139.

Belongs to the archease family.

Functionally, activates the tRNA-splicing ligase complex by facilitating the enzymatic turnover of catalytic subunit RtcB. Acts by promoting the guanylylation of RtcB, a key intermediate step in tRNA ligation. Can also alter the NTP specificity of RtcB such that ATP, dGTP or ITP is used efficiently. This chain is Protein archease, found in Sulfolobus acidocaldarius (strain ATCC 33909 / DSM 639 / JCM 8929 / NBRC 15157 / NCIMB 11770).